A 288-amino-acid polypeptide reads, in one-letter code: Executioner caspase (288 aa).

Cys131 is an active-site residue.

The protein belongs to the peptidase C14A family.

Functionally, may induce host cell apoptosis and contribute of the establishment of a special cell cleavage process in which apoppotic bodies are rescued by the virus and differentiate to form large vesicles in which virion assembles. This chain is Executioner caspase, found in Spodoptera frugiperda ascovirus 1a (SfAV-1a).